Reading from the N-terminus, the 405-residue chain is 3-hydroxy-3-methylglutaryl-coenzyme A reductase (405 aa).

Active-site charge relay system residues include E101 and D305. H400 acts as the Proton donor in catalysis.

The protein belongs to the HMG-CoA reductase family. As to quaternary structure, homodimer.

Its subcellular location is the cytoplasm. The enzyme catalyses (R)-mevalonate + 2 NADP(+) + CoA = (3S)-3-hydroxy-3-methylglutaryl-CoA + 2 NADPH + 2 H(+). Its pathway is metabolic intermediate biosynthesis; (R)-mevalonate biosynthesis; (R)-mevalonate from acetyl-CoA: step 3/3. Is competitively inhibited by lovastatin (formerly called mevinolin). Lovastatin also blocks the growth of H.salinarum, and this effect is reversed by addition of mevalonate, indicating the critical role that the mevalonate pathway plays in isoprenoid biosynthesis by these archaea. In terms of biological role, catalyzes the NADPH-dependent reductive deacylation of (S)-3-hydroxy-3-methylglutaryl-CoA (HMG-CoA) to (R)-mevalonate. Cannot use NADH instead of NADPH. Functions in the mevalonate (MVA) pathway leading to isopentenyl diphosphate (IPP), a key precursor for the biosynthesis of isoprenoid compounds such as archaeal membrane lipids. This Halobacterium salinarum (strain ATCC 29341 / DSM 671 / R1) protein is 3-hydroxy-3-methylglutaryl-coenzyme A reductase (hmgA).